A 98-amino-acid chain; its full sequence is uncharacterized protein (98 aa).

Residues 19–31 (RRMSKRSKNKAKK) show a composition bias toward basic residues. The interval 19-47 (RRMSKRSKNKAKKERVPVEDRPPTPMPTS) is disordered.

The protein belongs to the lymphocryptovirus BNLF2B family.

This is an uncharacterized protein from Epstein-Barr virus (strain AG876) (HHV-4).